Reading from the N-terminus, the 473-residue chain is Adenosylhomocysteinase (473 aa).

The substrate site is built by Thr60, Asp135, and Glu197. NAD(+) is bound at residue Thr198–Thr200. Positions 227 and 231 each coordinate substrate. Residues Asn232, Gly261–Gly266, Glu284, Asn319, Ile340–His342, and Asn385 contribute to the NAD(+) site.

Belongs to the adenosylhomocysteinase family. It depends on NAD(+) as a cofactor.

It localises to the cytoplasm. It catalyses the reaction S-adenosyl-L-homocysteine + H2O = L-homocysteine + adenosine. It participates in amino-acid biosynthesis; L-homocysteine biosynthesis; L-homocysteine from S-adenosyl-L-homocysteine: step 1/1. Its function is as follows. May play a key role in the regulation of the intracellular concentration of adenosylhomocysteine. The sequence is that of Adenosylhomocysteinase from Bradyrhizobium diazoefficiens (strain JCM 10833 / BCRC 13528 / IAM 13628 / NBRC 14792 / USDA 110).